The sequence spans 633 residues: uncharacterized protein (633 aa).

The tract at residues 1-188 (MNNRGGFSHP…GQSSFYNSSY (188 aa)) is disordered. 2 stretches are compositionally biased toward low complexity: residues 32 to 80 (GQPQ…GGNN) and 104 to 148 (NNGN…TNSR). Gly residues predominate over residues 152-178 (RGGSSRGGSSRGGNSGSSRGGSRGGYR). Residues 580-607 (KSKNWTVDQASDELKKLSKNLRLLVSKH) adopt a coiled-coil conformation. The segment at 611–633 (TKFQPPSADHTTQFEQDDEEEEN) is disordered.

This is an uncharacterized protein from Dictyostelium discoideum (Social amoeba).